A 61-amino-acid polypeptide reads, in one-letter code: Outer membrane lipoprotein YnbE (61 aa).

Positions 1–16 (MKILLAALTSSFMLVG) are cleaved as a signal peptide. Cys-17 carries the N-palmitoyl cysteine lipid modification. The S-diacylglycerol cysteine moiety is linked to residue Cys-17.

Belongs to the lipoprotein YnbE family. In terms of assembly, interacts with the C-terminal region of the probable phospholipid transport protein YdbH.

Its subcellular location is the cell outer membrane. Involved in outer membrane lipid homeostasis. Interacts with the inner membrane protein YdbH to form a functional protein bridge connecting the inner and outer membranes of the cell. Is required for YdbH's function and may facilitate phospholipid transport through the periplasm. This chain is Outer membrane lipoprotein YnbE (ynbE), found in Escherichia coli O6:H1 (strain CFT073 / ATCC 700928 / UPEC).